The chain runs to 383 residues: UDP-N-acetylglucosamine--N-acetylmuramyl-(pentapeptide) pyrophosphoryl-undecaprenol N-acetylglucosamine transferase (383 aa).

Residues 10–12, asparagine 124, arginine 165, serine 190, isoleucine 245, and glutamine 290 contribute to the UDP-N-acetyl-alpha-D-glucosamine site; that span reads TGG. Residues 363–383 form a disordered region; it reads SPFGQAREPGQKPARPPDPAS.

The protein belongs to the glycosyltransferase 28 family. MurG subfamily.

The protein resides in the cell inner membrane. The enzyme catalyses di-trans,octa-cis-undecaprenyl diphospho-N-acetyl-alpha-D-muramoyl-L-alanyl-D-glutamyl-meso-2,6-diaminopimeloyl-D-alanyl-D-alanine + UDP-N-acetyl-alpha-D-glucosamine = di-trans,octa-cis-undecaprenyl diphospho-[N-acetyl-alpha-D-glucosaminyl-(1-&gt;4)]-N-acetyl-alpha-D-muramoyl-L-alanyl-D-glutamyl-meso-2,6-diaminopimeloyl-D-alanyl-D-alanine + UDP + H(+). It functions in the pathway cell wall biogenesis; peptidoglycan biosynthesis. Functionally, cell wall formation. Catalyzes the transfer of a GlcNAc subunit on undecaprenyl-pyrophosphoryl-MurNAc-pentapeptide (lipid intermediate I) to form undecaprenyl-pyrophosphoryl-MurNAc-(pentapeptide)GlcNAc (lipid intermediate II). The chain is UDP-N-acetylglucosamine--N-acetylmuramyl-(pentapeptide) pyrophosphoryl-undecaprenol N-acetylglucosamine transferase from Anaeromyxobacter dehalogenans (strain 2CP-1 / ATCC BAA-258).